Reading from the N-terminus, the 285-residue chain is Pantothenate synthetase (285 aa).

30–37 (MGNLHQGH) contacts ATP. The Proton donor role is filled by histidine 37. Glutamine 61 lines the (R)-pantoate pocket. Residue glutamine 61 coordinates beta-alanine. 149–152 (GQKD) serves as a coordination point for ATP. Glutamine 155 contacts (R)-pantoate. Residues valine 178 and 186-189 (LSSR) contribute to the ATP site.

It belongs to the pantothenate synthetase family. Homodimer.

It is found in the cytoplasm. The catalysed reaction is (R)-pantoate + beta-alanine + ATP = (R)-pantothenate + AMP + diphosphate + H(+). The protein operates within cofactor biosynthesis; (R)-pantothenate biosynthesis; (R)-pantothenate from (R)-pantoate and beta-alanine: step 1/1. Catalyzes the condensation of pantoate with beta-alanine in an ATP-dependent reaction via a pantoyl-adenylate intermediate. In Aeromonas hydrophila subsp. hydrophila (strain ATCC 7966 / DSM 30187 / BCRC 13018 / CCUG 14551 / JCM 1027 / KCTC 2358 / NCIMB 9240 / NCTC 8049), this protein is Pantothenate synthetase.